Reading from the N-terminus, the 213-residue chain is ATP-dependent dethiobiotin synthetase BioD 2 (213 aa).

An ATP-binding site is contributed by 13–18 (DIGKTI). Residue T17 coordinates Mg(2+). K38 is a catalytic residue. T42 is a binding site for substrate. ATP is bound by residues D50 and 115 to 118 (EGAG). The Mg(2+) site is built by D50 and E115.

It belongs to the dethiobiotin synthetase family. In terms of assembly, homodimer. Mg(2+) is required as a cofactor.

Its subcellular location is the cytoplasm. It carries out the reaction (7R,8S)-7,8-diammoniononanoate + CO2 + ATP = (4R,5S)-dethiobiotin + ADP + phosphate + 3 H(+). The protein operates within cofactor biosynthesis; biotin biosynthesis; biotin from 7,8-diaminononanoate: step 1/2. Catalyzes a mechanistically unusual reaction, the ATP-dependent insertion of CO2 between the N7 and N8 nitrogen atoms of 7,8-diaminopelargonic acid (DAPA, also called 7,8-diammoniononanoate) to form a ureido ring. This is ATP-dependent dethiobiotin synthetase BioD 2 from Pasteurella multocida (strain Pm70).